The following is a 394-amino-acid chain: ATP phosphoribosyltransferase regulatory subunit (394 aa).

It belongs to the class-II aminoacyl-tRNA synthetase family. HisZ subfamily. As to quaternary structure, heteromultimer composed of HisG and HisZ subunits.

The protein localises to the cytoplasm. It participates in amino-acid biosynthesis; L-histidine biosynthesis; L-histidine from 5-phospho-alpha-D-ribose 1-diphosphate: step 1/9. In terms of biological role, required for the first step of histidine biosynthesis. May allow the feedback regulation of ATP phosphoribosyltransferase activity by histidine. The chain is ATP phosphoribosyltransferase regulatory subunit from Geobacillus kaustophilus (strain HTA426).